The following is a 944-amino-acid chain: Serine/threonine-protein kinase ATG1 (944 aa).

The 304-residue stretch at 24 to 327 folds into the Protein kinase domain; sequence FNIGSEIGKG…FENFFTHQVV (304 aa). Residues 30 to 38 and Lys-53 contribute to the ATP site; that span reads IGKGSFAQV. The Proton acceptor role is filled by Asp-167. The disordered stretch occupies residues 344–423; sequence RQESRDPRSA…NSPREGGEGL (80 aa). A compositionally biased stretch (low complexity) spans 356–367; it reads SGSPSLSSRSPR. The LIR motif lies at 428 to 431; that stretch reads PVAQ. Disordered regions lie at residues 443-475, 512-572, 777-801, 860-895, and 925-944; these read YDSV…PITE, LGDA…GSAS, QLPD…AGSP, EGSG…EEAH, and AVRR…HASS. Composition is skewed to polar residues over residues 447 to 459 and 516 to 549; these read TGRN…TSLL and SQRS…NALA. Over residues 563–572 the composition is skewed to low complexity; that stretch reads SLSASPGSAS. Residues 785 to 801 show a composition bias toward polar residues; the sequence is HPSNHGTESIASSAGSP. The segment covering 865 to 881 has biased composition (basic and acidic residues); the sequence is ETRRLSTGKEAEREAVK. A required for Cvt trafficking region spans residues 924–930; that stretch reads QAVRRRS.

It belongs to the protein kinase superfamily. Ser/Thr protein kinase family. APG1/unc-51/ULK1 subfamily. As to quaternary structure, homodimer. Dimerization requires the presence of ATG13. Forms a ternary complex with ATG13 and ATG17.

It localises to the cytoplasm. It is found in the preautophagosomal structure membrane. The catalysed reaction is L-seryl-[protein] + ATP = O-phospho-L-seryl-[protein] + ADP + H(+). It catalyses the reaction L-threonyl-[protein] + ATP = O-phospho-L-threonyl-[protein] + ADP + H(+). Its function is as follows. Serine/threonine protein kinase involved in the cytoplasm to vacuole transport (Cvt) and found to be essential in autophagy, where it is required for the formation of autophagosomes. Involved in the clearance of protein aggregates which cannot be efficiently cleared by the proteasome. Required for selective autophagic degradation of the nucleus (nucleophagy) as well as for mitophagy which contributes to regulate mitochondrial quantity and quality by eliminating the mitochondria to a basal level to fulfill cellular energy requirements and preventing excess ROS production. Also involved in endoplasmic reticulum-specific autophagic process, in selective removal of ER-associated degradation (ERAD) substrates. Plays a key role in ATG9 and ATG23 cycling through the pre-autophagosomal structure and is necessary to promote ATG18 binding to ATG9 through phosphorylation of ATG9. Catalyzes phosphorylation of ATG4, decreasing the interaction between ATG4 and ATG8 and impairing deconjugation of PE-conjugated forms of ATG8. Autophagy is required for proper vegetative growth, asexual/sexual reproduction, and full virulence. Autophagy is particularly involved in the biosynthesis of deoxynivalenol (DON), an important virulence determinant. In Gibberella zeae (strain ATCC MYA-4620 / CBS 123657 / FGSC 9075 / NRRL 31084 / PH-1) (Wheat head blight fungus), this protein is Serine/threonine-protein kinase ATG1.